The chain runs to 281 residues: 2-dehydro-3-deoxyphosphooctonate aldolase (281 aa).

The protein belongs to the KdsA family.

It localises to the cytoplasm. It carries out the reaction D-arabinose 5-phosphate + phosphoenolpyruvate + H2O = 3-deoxy-alpha-D-manno-2-octulosonate-8-phosphate + phosphate. The protein operates within carbohydrate biosynthesis; 3-deoxy-D-manno-octulosonate biosynthesis; 3-deoxy-D-manno-octulosonate from D-ribulose 5-phosphate: step 2/3. It participates in bacterial outer membrane biogenesis; lipopolysaccharide biosynthesis. This chain is 2-dehydro-3-deoxyphosphooctonate aldolase, found in Ectopseudomonas mendocina (strain ymp) (Pseudomonas mendocina).